The primary structure comprises 123 residues: Large ribosomal subunit protein bL12 (123 aa).

The protein belongs to the bacterial ribosomal protein bL12 family. As to quaternary structure, homodimer. Part of the ribosomal stalk of the 50S ribosomal subunit. Forms a multimeric L10(L12)X complex, where L10 forms an elongated spine to which 2 to 4 L12 dimers bind in a sequential fashion. Binds GTP-bound translation factors.

Its function is as follows. Forms part of the ribosomal stalk which helps the ribosome interact with GTP-bound translation factors. Is thus essential for accurate translation. This is Large ribosomal subunit protein bL12 from Haemophilus influenzae (strain 86-028NP).